The chain runs to 288 residues: Quinate/shikimate dehydrogenase (288 aa).

Substrate contacts are provided by lysine 71 and aspartate 107. NAD(+) contacts are provided by residues 132 to 135 (AGGA), 155 to 158 (NRRD), lysine 205, 232 to 235 (CVYN), and glycine 255.

This sequence belongs to the shikimate dehydrogenase family. Homodimer.

The catalysed reaction is L-quinate + NAD(+) = 3-dehydroquinate + NADH + H(+). The enzyme catalyses L-quinate + NADP(+) = 3-dehydroquinate + NADPH + H(+). It catalyses the reaction shikimate + NADP(+) = 3-dehydroshikimate + NADPH + H(+). It carries out the reaction shikimate + NAD(+) = 3-dehydroshikimate + NADH + H(+). It participates in metabolic intermediate biosynthesis; chorismate biosynthesis; chorismate from D-erythrose 4-phosphate and phosphoenolpyruvate: step 4/7. Its function is as follows. The actual biological function of YdiB remains unclear, nor is it known whether 3-dehydroshikimate or quinate represents the natural substrate. Catalyzes the reversible NAD-dependent reduction of both 3-dehydroshikimate (DHSA) and 3-dehydroquinate to yield shikimate (SA) and quinate, respectively. It can use both NAD or NADP for catalysis, however it has higher catalytic efficiency with NAD. This chain is Quinate/shikimate dehydrogenase, found in Escherichia coli O7:K1 (strain IAI39 / ExPEC).